The sequence spans 513 residues: uncharacterized protein (513 aa).

Transmembrane regions (helical) follow at residues 262–282 (FAIF…FWQL), 304–324 (YMFL…ITYH), 341–361 (EPIP…FEAL), 382–402 (LVIG…VIIV), and 429–449 (MFLA…ILVL). The segment at 489–513 (PGTYSRGNGQKGAKREDPKDEENNI) is disordered. Residues 501–513 (AKREDPKDEENNI) show a composition bias toward basic and acidic residues.

It belongs to the GerABKA family.

The protein localises to the cell membrane. This is an uncharacterized protein from Bacillus subtilis (strain 168).